The chain runs to 240 residues: Probable transcriptional regulatory protein HPP12_0160 (240 aa).

The protein belongs to the TACO1 family.

The protein resides in the cytoplasm. This is Probable transcriptional regulatory protein HPP12_0160 from Helicobacter pylori (strain P12).